A 259-amino-acid chain; its full sequence is DNA repair protein RecO (259 aa).

The protein belongs to the RecO family.

Functionally, involved in DNA repair and RecF pathway recombination. The protein is DNA repair protein RecO of Chloroherpeton thalassium (strain ATCC 35110 / GB-78).